The primary structure comprises 434 residues: Tol-Pal system protein TolB (434 aa).

The first 24 residues, 1–24, serve as a signal peptide directing secretion; sequence MKFSAYLTTLFIVLFSLFIQTVQA.

The protein belongs to the TolB family. As to quaternary structure, the Tol-Pal system is composed of five core proteins: the inner membrane proteins TolA, TolQ and TolR, the periplasmic protein TolB and the outer membrane protein Pal. They form a network linking the inner and outer membranes and the peptidoglycan layer.

Its subcellular location is the periplasm. Functionally, part of the Tol-Pal system, which plays a role in outer membrane invagination during cell division and is important for maintaining outer membrane integrity. The sequence is that of Tol-Pal system protein TolB from Histophilus somni (strain 129Pt) (Haemophilus somnus).